The chain runs to 244 residues: Serine-rich single-pass membrane protein 1 (244 aa).

Residues 35–55 traverse the membrane as a helical segment; it reads CGTIGSFLLWYFVIVFVLMFF. Disordered stretches follow at residues 65–114, 126–191, and 210–244; these read DKKD…PVTN, QRRA…LGSY, and LAHH…FSKF. Over residues 80-94 the composition is skewed to basic and acidic residues; it reads ASKETSCKRQSKDSA. Composition is skewed to polar residues over residues 96-114 and 132-142; these read DPSQ…PVTN and QSQFNEVNQNQ. Basic and acidic residues predominate over residues 161 to 176; that stretch reads SWKESESEHHPSPDSI.

The protein resides in the membrane. The protein is Serine-rich single-pass membrane protein 1 (SSMEM1) of Homo sapiens (Human).